The chain runs to 1070 residues: DNA-directed RNA polymerase subunit beta (1070 aa).

This sequence belongs to the RNA polymerase beta chain family. In terms of assembly, in plastids the minimal PEP RNA polymerase catalytic core is composed of four subunits: alpha, beta, beta', and beta''. When a (nuclear-encoded) sigma factor is associated with the core the holoenzyme is formed, which can initiate transcription.

It localises to the plastid. It carries out the reaction RNA(n) + a ribonucleoside 5'-triphosphate = RNA(n+1) + diphosphate. In terms of biological role, DNA-dependent RNA polymerase catalyzes the transcription of DNA into RNA using the four ribonucleoside triphosphates as substrates. In Cuscuta exaltata (Tall dodder), this protein is DNA-directed RNA polymerase subunit beta.